We begin with the raw amino-acid sequence, 45 residues long: KRKFLDAALRYYSISQIEKKAYLPDKSTVLDRAMIEHNNLLSASK.

It belongs to the CSN4 family. As to quaternary structure, component of the CSN complex, probably composed of CSN1, CSN2, CSN3, CSN4, CSN5 (CSN5A or CSN5B), CSN6 (CSN6A or CSN6B), CSN7 and CSN8.

The protein localises to the cytoplasm. The protein resides in the nucleus. Component of the COP9 signalosome complex (CSN), a complex involved in various cellular and developmental processes such as photomorphogenesis and auxin and jasmonate responses. The CSN complex is an essential regulator of the ubiquitin (Ubl) conjugation pathway by mediating the deneddylation of the cullin subunits of SCF-type E3 ligase complexes, leading to decrease the Ubl ligase activity of SCF. It is involved in repression of photomorphogenesis in darkness by regulating the activity of COP1-containing Ubl ligase complexes. The chain is COP9 signalosome complex subunit 4 (CSN4) from Brassica oleracea (Wild cabbage).